The primary structure comprises 209 residues: Protein TIFY 11c (209 aa).

Positions Glu93 to Ser128 constitute a Tify domain. Residues Pro153–Leu177 carry the Jas motif. The Nuclear localization signal signature appears at Ala155 to Arg162. A disordered region spans residues Glu175–Leu209. Residues Glu179–Gly196 are compositionally biased toward basic and acidic residues.

It belongs to the TIFY/JAZ family. Post-translationally, ubiquitinated. Targeted for degradation by the SCF(COI1) E3 ubiquitin ligase-proteasome pathway during jasmonate signaling.

The protein localises to the nucleus. Functionally, repressor of jasmonate responses. This chain is Protein TIFY 11c, found in Oryza sativa subsp. indica (Rice).